Here is a 206-residue protein sequence, read N- to C-terminus: Small ribosomal subunit protein uS4 (206 aa).

The S4 RNA-binding domain occupies G96 to K156.

The protein belongs to the universal ribosomal protein uS4 family. In terms of assembly, part of the 30S ribosomal subunit. Contacts protein S5. The interaction surface between S4 and S5 is involved in control of translational fidelity.

Functionally, one of the primary rRNA binding proteins, it binds directly to 16S rRNA where it nucleates assembly of the body of the 30S subunit. In terms of biological role, with S5 and S12 plays an important role in translational accuracy. This Mannheimia succiniciproducens (strain KCTC 0769BP / MBEL55E) protein is Small ribosomal subunit protein uS4.